The chain runs to 289 residues: Rhodopsin (289 aa).

Topologically, residues 1 to 7 (YLVNPAA) are extracellular. The chain crosses the membrane as a helical span at residues 8-32 (YAALGAYMFLLILIGFPINFLTLYV). Residues 33 to 44 (TLEHKKLRTPLN) lie on the Cytoplasmic side of the membrane. Residues 45–67 (YILLNLAVGNLFMVLGGFTTTMY) form a helical membrane-spanning segment. At 68–81 (TSMHGYFVLGRLGC) the chain is on the extracellular side. Residues C81 and C158 are joined by a disulfide bond. A helical membrane pass occupies residues 82-104 (NLEGFFATLGGEIALWSLVVLAI). The 'Ionic lock' involved in activated form stabilization signature appears at 105–107 (ERW). The Cytoplasmic portion of the chain corresponds to 105–123 (ERWIVVCKPISKFRFTEDH). The chain crosses the membrane as a helical span at residues 124–144 (AIMGLAFSWVMGLACAVPPLV). The Extracellular segment spans residues 145–173 (GWSRYIPEGMKCSCGVDYYTRAEGFNNES). A glycan (N-linked (GlcNAc...) asparagine) is linked at N171. Residues 174–195 (FVIYMFIVHFLIPLSVIFFCYG) form a helical membrane-spanning segment. Residues 196 to 223 (RLLCAVKEAAAAQQESETTQRAEKEVSR) are Cytoplasmic-facing. The helical transmembrane segment at 224-245 (MVVIMVIGFLVCWLPYASVAWW) threads the bilayer. Residues 246–257 (IFCNQGSDFGPI) are Extracellular-facing. Residues 258-279 (FMTLPSFFAKRPAIYNPMIYIC) traverse the membrane as a helical segment. K267 carries the N6-(retinylidene)lysine modification. Residues 280-289 (MNKQFRHCMI) are Cytoplasmic-facing.

Belongs to the G-protein coupled receptor 1 family. Opsin subfamily. Phosphorylated on some or all of the serine and threonine residues present in the C-terminal region. In terms of processing, contains one covalently linked retinal chromophore.

It localises to the membrane. The protein localises to the cell projection. It is found in the cilium. Its subcellular location is the photoreceptor outer segment. Photoreceptor required for image-forming vision at low light intensity. While most salt water fish species use retinal as chromophore, most freshwater fish use 3-dehydroretinal, or a mixture of retinal and 3-dehydroretinal. Light-induced isomerization of 11-cis to all-trans retinal triggers a conformational change that activates signaling via G-proteins. Subsequent receptor phosphorylation mediates displacement of the bound G-protein alpha subunit by arrestin and terminates signaling. This is Rhodopsin (rho) from Cottinella boulengeri (Short-headed sculpin).